A 661-amino-acid polypeptide reads, in one-letter code: Ubiquitin carboxyl-terminal hydrolase 25 (661 aa).

The region spanning 24–335 (LGLRNLGNTC…KAYILFFSRS (312 aa)) is the USP domain. Residue cysteine 33 is the Nucleophile of the active site. Histidine 294 (proton acceptor) is an active-site residue. Disordered regions lie at residues 387–406 (GNLASSKPHKFIRPKPRAEQ) and 449–558 (FHQD…LCSS). The span at 449 to 461 (FHQDENIAPKANK) shows a compositional bias: basic and acidic residues. 2 stretches are compositionally biased toward polar residues: residues 462–475 (ENSVSVLPTKVNSG) and 545–558 (NGVSTTQSKGLCSS).

The protein belongs to the peptidase C19 family.

The enzyme catalyses Thiol-dependent hydrolysis of ester, thioester, amide, peptide and isopeptide bonds formed by the C-terminal Gly of ubiquitin (a 76-residue protein attached to proteins as an intracellular targeting signal).. Its function is as follows. Recognizes and hydrolyzes the peptide bond at the C-terminal Gly of ubiquitin. Involved in the processing of poly-ubiquitin precursors as well as that of ubiquitinated proteins. The protein is Ubiquitin carboxyl-terminal hydrolase 25 (UBP25) of Arabidopsis thaliana (Mouse-ear cress).